The chain runs to 562 residues: Probable tRNA (uracil-O(2)-)-methyltransferase (562 aa).

Residues 520 to 546 (VSRRQQTNPKKQEATNRPKQPCWMSLN) are disordered. Residues 535-562 (NRPKQPCWMSLNHPDGCPLGPESCRYLH) form a C3H1-type zinc finger.

This sequence belongs to the TRM44 family.

It is found in the cytoplasm. It catalyses the reaction uridine(44) in tRNA(Ser) + S-adenosyl-L-methionine = 2'-O-methyluridine(44) in tRNA(Ser) + S-adenosyl-L-homocysteine + H(+). In terms of biological role, probable adenosyl-L-methionine (AdoMet)-dependent tRNA (uracil-O(2)-)-methyltransferase. The protein is Probable tRNA (uracil-O(2)-)-methyltransferase of Caenorhabditis briggsae.